The sequence spans 214 residues: Thymidylate kinase (214 aa).

Residue 7-14 participates in ATP binding; it reads GVDGAGKR. 7 residues coordinate dTMP: aspartate 9, tyrosine 39, phenylalanine 70, arginine 74, arginine 95, asparagine 100, and tyrosine 103. Aspartate 9 contributes to the Mg(2+) binding site. The segment at 147 to 159 is LID; it reads GERSRGRAQRDPG. DTMP contacts are provided by aspartate 163 and tyrosine 165. Residue glutamate 166 coordinates Mg(2+).

Belongs to the thymidylate kinase family. In terms of assembly, homodimer. The cofactor is Mg(2+).

It catalyses the reaction dTMP + ATP = dTDP + ADP. It functions in the pathway pyrimidine metabolism; dTTP biosynthesis. In terms of biological role, catalyzes the reversible phosphorylation of deoxythymidine monophosphate (dTMP) to deoxythymidine diphosphate (dTDP), using ATP as its preferred phosphoryl donor. Situated at the junction of both de novo and salvage pathways of deoxythymidine triphosphate (dTTP) synthesis, is essential for DNA synthesis and cellular growth. The protein is Thymidylate kinase (tmk) of Mycobacterium tuberculosis (strain CDC 1551 / Oshkosh).